The following is a 212-amino-acid chain: MSTATLVVFPPPPPVPIPTYITSLGLGYSIAIALGFLVLISTIILSSYICCRASRLRFSASAANANANASFSDRGVIVPRIIFVAEDDDLESGNVVVGGLDHSVINSYPKFHFTKDITAVVNGDGFHDGEGRETTCSICLCEYMEEEMLRMMPECKHYFHVYCLDAWLKLNGSCPVCRNSPLPTPQSTPQSTPLSEVVPLSQYAADRRRSRR.

The helical transmembrane segment at 24 to 44 (LGLGYSIAIALGFLVLISTII) threads the bilayer. The RING-type; atypical zinc-finger motif lies at 136-178 (CSICLCEYMEEEMLRMMPECKHYFHVYCLDAWLKLNGSCPVCR). Residues 182 to 212 (LPTPQSTPQSTPLSEVVPLSQYAADRRRSRR) form a disordered region. Low complexity predominate over residues 185 to 195 (PQSTPQSTPLS).

Belongs to the RING-type zinc finger family. ATL subfamily.

The protein resides in the membrane. The enzyme catalyses S-ubiquitinyl-[E2 ubiquitin-conjugating enzyme]-L-cysteine + [acceptor protein]-L-lysine = [E2 ubiquitin-conjugating enzyme]-L-cysteine + N(6)-ubiquitinyl-[acceptor protein]-L-lysine.. Its pathway is protein modification; protein ubiquitination. The polypeptide is RING-H2 finger protein ATL68 (ATL68) (Arabidopsis thaliana (Mouse-ear cress)).